The primary structure comprises 115 residues: MFNLIQHIEHEQMKNLPAFRPGDSVEVKVWVVEGSKKRLQSFEGMIIAIRNRGLHSAFTVRKISNGEGVERVFQMHSPIIESITVKRCGFVRKAKLYYLRKRTGKAARIKERISS.

The protein belongs to the bacterial ribosomal protein bL19 family.

In terms of biological role, this protein is located at the 30S-50S ribosomal subunit interface and may play a role in the structure and function of the aminoacyl-tRNA binding site. The protein is Large ribosomal subunit protein bL19 of Baumannia cicadellinicola subsp. Homalodisca coagulata.